The following is a 323-amino-acid chain: Serine/threonine-protein phosphatase PP1-gamma catalytic subunit B (323 aa).

Mn(2+) is bound by residues D64, H66, D92, and N124. H125 functions as the Proton donor in the catalytic mechanism. The Mn(2+) site is built by H173 and H248. Residues 301–323 form a disordered region; it reads KKKPNASRPVTPPRGIITKQAKK.

This sequence belongs to the PPP phosphatase family. PP-1 subfamily. PP1 comprises a catalytic subunit, ppp1c1, ppp1cb or ppp1cc, which is folded into its native form by inhibitor 2 and glycogen synthetase kinase 3, and then is complexed to one or several targeting or regulatory subunits. It depends on Mn(2+) as a cofactor.

The protein localises to the cytoplasm. It localises to the nucleus. The protein resides in the cleavage furrow. It is found in the nucleolus. Its subcellular location is the nucleoplasm. The protein localises to the chromosome. It localises to the centromere. The protein resides in the kinetochore. It is found in the nucleus speckle. Its subcellular location is the midbody. The protein localises to the mitochondrion. The enzyme catalyses O-phospho-L-seryl-[protein] + H2O = L-seryl-[protein] + phosphate. The catalysed reaction is O-phospho-L-threonyl-[protein] + H2O = L-threonyl-[protein] + phosphate. Functionally, protein phosphatase that associates with over 200 regulatory proteins to form highly specific holoenzymes which dephosphorylate hundreds of biological targets. Protein phosphatase 1 (PP1) is essential for cell division, and participates in the regulation of glycogen metabolism, muscle contractility and protein synthesis. Promotes nuclear envelope reassembly by targeting nuclear membrane vesicles to chromatin at the end of mitosis. Acts by dephosphorylating membrane proteins such as lamin B receptor (lbr) to regulate the binding of membrane proteins to chromatin. This Xenopus laevis (African clawed frog) protein is Serine/threonine-protein phosphatase PP1-gamma catalytic subunit B (ppp1cc-b).